Reading from the N-terminus, the 70-residue chain is MRAIISLILISAMVFSMIAAVPEEEGLQLSEDERGGCLPHNRFCNALSGPRCCSGLRCKELSIWDSRCLG.

Positions 1 to 20 (MRAIISLILISAMVFSMIAA) are cleaved as a signal peptide. Positions 21–34 (VPEEEGLQLSEDER) are excised as a propeptide. Cystine bridges form between C37/C53, C44/C58, and C52/C68. A Leucine amide modification is found at L69.

It belongs to the neurotoxin 01 (U2-agtx) family. As to expression, expressed by the venom gland.

The protein localises to the secreted. In terms of biological role, insect active toxin causing rapid but reversible paralysis in crickets. No activity shown in mammals. Does not show effect on mammalian voltage-gated calcium channels. The sequence is that of U2-agatoxin-Ao1b from Agelena orientalis (Funnel-web spider).